The sequence spans 132 residues: Small ribosomal subunit protein uS8 (132 aa).

The protein belongs to the universal ribosomal protein uS8 family. In terms of assembly, part of the 30S ribosomal subunit. Contacts proteins S5 and S12.

One of the primary rRNA binding proteins, it binds directly to 16S rRNA central domain where it helps coordinate assembly of the platform of the 30S subunit. In Xylella fastidiosa (strain M23), this protein is Small ribosomal subunit protein uS8.